The primary structure comprises 174 residues: MNNDNDDSIEIIGGVDPRTMATRGEDESRDSDEPSLTDLVEQPAKVMRIGTMIKQLLEEVRAAPLDEASRNQLREIHATSIRELEDGLAPELREELDRLTLPFNESTAPSNAELRIAQAQLVGWLEGLFHGIQTALFAQQMAARAQLEQMRHSALPPGMGKPGQAGGQGTGQYL.

2 disordered regions span residues methionine 1–threonine 37 and serine 153–leucine 174. Positions glycine 160–leucine 174 are enriched in gly residues. Residues glutamine 172 to leucine 174 carry the HbYX motif motif.

Belongs to the Bpa family. As to quaternary structure, forms a homooligomeric, either hexameric or heptameric, ring-like structure which stacks co-axially with the proteasomal alpha-rings.

Interacts with the core proteasome alpha-subunit (PrcA) through its C-terminal hydrophobic-tyrosine-X motif (HbYX motif). Interaction of Bpa with the proteasome stimulates proteasomal peptidase and casein degradation activity, which suggests Bpa could play a role in the removal of non-native or damaged proteins by influencing the conformation of the proteasome complex upon interaction. This Mycobacterium leprae (strain TN) protein is Bacterial proteasome activator (bpa).